We begin with the raw amino-acid sequence, 62 residues long: Large ribosomal subunit protein uL29 (62 aa).

This sequence belongs to the universal ribosomal protein uL29 family.

The sequence is that of Large ribosomal subunit protein uL29 from Chromobacterium violaceum (strain ATCC 12472 / DSM 30191 / JCM 1249 / CCUG 213 / NBRC 12614 / NCIMB 9131 / NCTC 9757 / MK).